The sequence spans 59 residues: Potassium channel toxin alpha-KTx 15.2 (59 aa).

Positions M1 to C22 are cleaved as a signal peptide. Q23 carries the post-translational modification Pyrrolidone carboxylic acid. Intrachain disulfides connect C30/C50, C35/C55, and C39/C57.

This sequence belongs to the short scorpion toxin superfamily. Potassium channel inhibitor family. Alpha-KTx 15 subfamily. In terms of tissue distribution, expressed by the venom gland.

The protein resides in the secreted. In terms of biological role, blocks both human ERG1/Kv11.1/KCNH2 potassium channels (in a reversible manner) and A-type voltage-gated potassium channels Kv4/KCND (in an irreversible manner). The presence of the Kv4-associated proteins DPP6 or DPP10 is mandatory to have high-affinity blockade of Kv4.2/KCND2 and Kv4.3/KCND3 channels. In contrast, the presence of the Kv4-associated protein KChIP1/KCNIP1 does not enhance the affinity blockade. May dispose of two functional faces (A and B); the two basic residues (Arg-40 and Lys-41) on the alpha-helix side of the peptide that blocks the hERG current (face A) and the typical dyad through which it blocks A-type currents on the beta-sheet side (face B). In adult rat brain, it binds to sites in the striatum, hippocampus, superior colliculus, and cerebellum. It shares the same target in rat brain than AaTX1 (AC Q867F4) and AmmTX3 (AC P60208). In DPP6 knockout mice, A-type currents are much less affected by the toxin than in wild-type mice. This chain is Potassium channel toxin alpha-KTx 15.2, found in Olivierus martensii (Manchurian scorpion).